Here is a 92-residue protein sequence, read N- to C-terminus: MTRSLKKNPFVANHLLAKIEKLNMREEKETIVTWSRASTIIPTMIGHTIAIHNGKEHLPIFITDRMVGHKLGEFAPTLTFRGHARTDTRSRR.

The protein belongs to the universal ribosomal protein uS19 family.

The protein localises to the plastid. It localises to the chloroplast. Functionally, protein S19 forms a complex with S13 that binds strongly to the 16S ribosomal RNA. In Calycanthus floridus var. glaucus (Eastern sweetshrub), this protein is Small ribosomal subunit protein uS19c.